Reading from the N-terminus, the 165-residue chain is uncharacterized protein (165 aa).

Residues 1-38 (MFTVKEKNRQELEEELNDLEFQIYRMQENMKDLSKDAK) adopt a coiled-coil conformation.

This is an uncharacterized protein from Bacillus subtilis (strain 168).